A 495-amino-acid polypeptide reads, in one-letter code: Aspartyl/glutamyl-tRNA(Asn/Gln) amidotransferase subunit B (495 aa).

This sequence belongs to the GatB/GatE family. GatB subfamily. As to quaternary structure, heterotrimer of A, B and C subunits.

The enzyme catalyses L-glutamyl-tRNA(Gln) + L-glutamine + ATP + H2O = L-glutaminyl-tRNA(Gln) + L-glutamate + ADP + phosphate + H(+). It carries out the reaction L-aspartyl-tRNA(Asn) + L-glutamine + ATP + H2O = L-asparaginyl-tRNA(Asn) + L-glutamate + ADP + phosphate + 2 H(+). Its function is as follows. Allows the formation of correctly charged Asn-tRNA(Asn) or Gln-tRNA(Gln) through the transamidation of misacylated Asp-tRNA(Asn) or Glu-tRNA(Gln) in organisms which lack either or both of asparaginyl-tRNA or glutaminyl-tRNA synthetases. The reaction takes place in the presence of glutamine and ATP through an activated phospho-Asp-tRNA(Asn) or phospho-Glu-tRNA(Gln). This is Aspartyl/glutamyl-tRNA(Asn/Gln) amidotransferase subunit B from Methanosarcina barkeri (strain Fusaro / DSM 804).